Reading from the N-terminus, the 230-residue chain is 2,3-bisphosphoglycerate-dependent phosphoglycerate mutase (230 aa).

Substrate is bound by residues 8 to 15 (RHGESEWN), 21 to 22 (TG), Arg60, 87 to 90 (ERHY), Lys98, 114 to 115 (RR), and 183 to 184 (GN). His9 (tele-phosphohistidine intermediate) is an active-site residue. Residue Glu87 is the Proton donor/acceptor of the active site.

Belongs to the phosphoglycerate mutase family. BPG-dependent PGAM subfamily.

The catalysed reaction is (2R)-2-phosphoglycerate = (2R)-3-phosphoglycerate. It functions in the pathway carbohydrate degradation; glycolysis; pyruvate from D-glyceraldehyde 3-phosphate: step 3/5. In terms of biological role, catalyzes the interconversion of 2-phosphoglycerate and 3-phosphoglycerate. In Streptococcus mutans serotype c (strain ATCC 700610 / UA159), this protein is 2,3-bisphosphoglycerate-dependent phosphoglycerate mutase.